Consider the following 557-residue polypeptide: Formate--tetrahydrofolate ligase (557 aa).

65–72 contacts ATP; that stretch reads TPAGEGKT.

Belongs to the formate--tetrahydrofolate ligase family.

The enzyme catalyses (6S)-5,6,7,8-tetrahydrofolate + formate + ATP = (6R)-10-formyltetrahydrofolate + ADP + phosphate. The protein operates within one-carbon metabolism; tetrahydrofolate interconversion. The protein is Formate--tetrahydrofolate ligase of Methylococcus capsulatus (strain ATCC 33009 / NCIMB 11132 / Bath).